The sequence spans 423 residues: 3-isopropylmalate dehydratase large subunit 1 (423 aa).

Residues Cys-302, Cys-362, and Cys-365 each contribute to the [4Fe-4S] cluster site.

Belongs to the aconitase/IPM isomerase family. LeuC type 2 subfamily. In terms of assembly, heterodimer of LeuC and LeuD. [4Fe-4S] cluster is required as a cofactor.

It catalyses the reaction (2R,3S)-3-isopropylmalate = (2S)-2-isopropylmalate. The protein operates within amino-acid biosynthesis; L-leucine biosynthesis; L-leucine from 3-methyl-2-oxobutanoate: step 2/4. Functionally, catalyzes the isomerization between 2-isopropylmalate and 3-isopropylmalate, via the formation of 2-isopropylmaleate. This is 3-isopropylmalate dehydratase large subunit 1 from Pyrococcus abyssi (strain GE5 / Orsay).